A 112-amino-acid chain; its full sequence is MSEQYSNDFKLNAAMAAIVLSGGVIGYAKSKSMPSLIAGSVFGLLYSTSAYYLSQGNSKVGLGVSVLASSLLGGVMGKKAIATSKPIPIILATGSAFTLLSSGKELYNIHKN.

A run of 4 helical transmembrane segments spans residues 9–26 (FKLN…GVIG), 36–53 (LIAG…AYYL), 60–77 (VGLG…GVMG), and 87–109 (IPII…LYNI).

This sequence belongs to the TMEM14 family.

It localises to the membrane. The polypeptide is Transmembrane protein 14 homolog (Dictyostelium discoideum (Social amoeba)).